The following is a 962-amino-acid chain: UvrABC system protein A (962 aa).

Residue 38-45 (GISGSGKS) participates in ATP binding. 2 ABC transporter domains span residues 319-597 (WSKS…PDSL) and 617-944 (PSGR…RFLR). 649–656 (GVSGSGKS) is a binding site for ATP. A C4-type zinc finger spans residues 748–774 (CEACGGDGIIKIEMHFLADVYVPCEVC).

This sequence belongs to the ABC transporter superfamily. UvrA family. Forms a heterotetramer with UvrB during the search for lesions.

Its subcellular location is the cytoplasm. In terms of biological role, the UvrABC repair system catalyzes the recognition and processing of DNA lesions. UvrA is an ATPase and a DNA-binding protein. A damage recognition complex composed of 2 UvrA and 2 UvrB subunits scans DNA for abnormalities. When the presence of a lesion has been verified by UvrB, the UvrA molecules dissociate. This Methanothermobacter thermautotrophicus (strain ATCC 29096 / DSM 1053 / JCM 10044 / NBRC 100330 / Delta H) (Methanobacterium thermoautotrophicum) protein is UvrABC system protein A.